The chain runs to 240 residues: E3 ubiquitin-protein ligase LubX (240 aa).

U-box domains follow at residues 30-103 (TTPT…QTNY) and 125-198 (EIPD…RKRE).

Ubiquitinated in the presence of host E1 ubiquitin-activating enzyme, E2 ubiquitin-conjugating enzyme and ubiquitin.

It localises to the secreted. It is found in the host cell. The enzyme catalyses S-ubiquitinyl-[E2 ubiquitin-conjugating enzyme]-L-cysteine + [acceptor protein]-L-lysine = [E2 ubiquitin-conjugating enzyme]-L-cysteine + N(6)-ubiquitinyl-[acceptor protein]-L-lysine.. Effector proteins function to alter host cell physiology and promote bacterial survival in host tissues. This protein is an E3 ubiquitin ligase that interferes with host's ubiquitination pathway. The polypeptide is E3 ubiquitin-protein ligase LubX (lubX) (Legionella pneumophila (strain Paris)).